A 279-amino-acid chain; its full sequence is BEN domain-containing protein 6 (279 aa).

Positions 1 to 15 (MQKIVQTDEITNTQA) are enriched in polar residues. 2 disordered regions span residues 1–65 (MQKI…LAEL) and 134–172 (RATN…TDEK). Residues 62–99 (LAELSKEELCAKIKSLKEKLTNTRKENSRLRQSLVMLQ) are a coiled coil. A compositionally biased stretch (polar residues) spans 134 to 148 (RATNNSSPDSFASTC). Basic and acidic residues predominate over residues 162-172 (KPEEEHQTDEK). The BEN domain occupies 171-271 (EKQFQIEKWQ…NCTKKPNLSK (101 aa)).

As to quaternary structure, interacts (via BEN domain) with RBPJ.

It is found in the nucleus. Its function is as follows. Acts as a corepressor of recombining binding protein suppressor hairless (RBPJ) and inhibits Notch signaling in neural stem cells, thereby opposing their self-renewal and promoting neurogenesis. This Homo sapiens (Human) protein is BEN domain-containing protein 6 (BEND6).